Reading from the N-terminus, the 73-residue chain is U3-agatoxin-Ao1e (73 aa).

The N-terminal stretch at 1–20 (MRTIISLLLLSAMVFAVIEA) is a signal peptide. Residues 21 to 34 (ISLEEGLQLFEGER) constitute a propeptide that is removed on maturation. 4 cysteine pairs are disulfide-bonded: Cys-36-Cys-52, Cys-43-Cys-57, Cys-51-Cys-67, and Cys-59-Cys-65. Residue Asn-71 is modified to Asparagine amide.

The protein belongs to the neurotoxin 07 (Beta/delta-agtx) family. 03 (aga-4) subfamily. Aga sub-subfamily. In terms of tissue distribution, expressed by the venom gland.

It localises to the secreted. In terms of biological role, insecticidal neurotoxin that induces an irreversible spastic paralysis when injected into insects. Modifies presynaptic voltage-gated sodium channels (Nav), causing them to open at the normal resting potential of the nerve. This leads to spontaneous release of neurotransmitter and repetitive action potentials in motor neurons. In Agelena orientalis (Funnel-web spider), this protein is U3-agatoxin-Ao1e.